The primary structure comprises 399 residues: Zinc metalloproteinase nas-25 (399 aa).

The N-terminal stretch at 1-20 (MQIYLGITICLVAFLTVIDC) is a signal peptide. One can recognise a Peptidase M12A domain in the interval 41-237 (QVQRDLTYRW…DQINQYYQCY (197 aa)). 2 N-linked (GlcNAc...) asparagine glycosylation sites follow: asparagine 52 and asparagine 61. 4 disulfide bridges follow: cysteine 82-cysteine 236, cysteine 106-cysteine 126, cysteine 240-cysteine 260, and cysteine 265-cysteine 274. Histidine 134 provides a ligand contact to Zn(2+). Glutamate 135 is a catalytic residue. 2 residues coordinate Zn(2+): histidine 138 and histidine 144. An EGF-like domain is found at 232-275 (QYYQCYDSCRNAGQLANCANGGIPNPNNCQVCNCPMGYGGDLCD). A glycan (N-linked (GlcNAc...) asparagine) is linked at asparagine 371.

The cofactor is Zn(2+). As to expression, expressed in pharyngeal muscles, pharyngeal-intestinal valve, rectal gland cells and arcade cells.

It is found in the secreted. Its function is as follows. Metalloprotease. The chain is Zinc metalloproteinase nas-25 (nas-25) from Caenorhabditis elegans.